Consider the following 140-residue polypeptide: uncharacterized protein (140 aa).

A run of 3 helical transmembrane segments spans residues 20–42 (ILYYGGLIGIIFMAITFAIYVSG), 88–110 (FVALAFLAMITIICYLAIIPVLL), and 115–137 (IIYTILAIAEVIILLLAASGLLQ).

It localises to the cell membrane. This is an uncharacterized protein from Archaeoglobus fulgidus (strain ATCC 49558 / DSM 4304 / JCM 9628 / NBRC 100126 / VC-16).